A 546-amino-acid polypeptide reads, in one-letter code: Undecaprenyl phosphate-alpha-4-amino-4-deoxy-L-arabinose arabinosyl transferase (546 aa).

Transmembrane regions (helical) follow at residues 6–26 (INLAVIVPLFFIMLYLLPLGL), 87–107 (AASAFSTLGAAFCLFLLVGRF), 113–133 (AWVTVSVFLSLFLVSNLGTYS), 177–197 (LLTKGFLALALPVIVVVPFMI), 208–228 (WGWWVMLVALIVTLPWALAIH), 260–280 (YYLPYLLLGTLPWLFLAPSAI), 289–309 (SPLLRYALLWALIPFIFFSAA), 313–333 (LVTYILPCMAPLAIILAQGII), 345–365 (IGSVINCAFFSLISVAVIVLF), 380–400 (PWLLVVVCGSWAVLAYISIKA), 410–430 (YMLMPLSLFLLAWAIIPNISI), and 450–467 (AILIADYPSTMSAFNWYF).

The protein belongs to the glycosyltransferase 83 family.

The protein localises to the cell inner membrane. The enzyme catalyses 4-amino-4-deoxy-alpha-L-arabinopyranosyl di-trans,octa-cis-undecaprenyl phosphate + lipid IVA = lipid IIA + di-trans,octa-cis-undecaprenyl phosphate.. It functions in the pathway lipopolysaccharide metabolism; 4-amino-4-deoxy-beta-L-arabinose-lipid A biosynthesis. Catalyzes the transfer of the L-Ara4N moiety of the glycolipid undecaprenyl phosphate-alpha-L-Ara4N to lipid A. The modified arabinose is attached to lipid A and is required for resistance to polymyxin and cationic antimicrobial peptides. This chain is Undecaprenyl phosphate-alpha-4-amino-4-deoxy-L-arabinose arabinosyl transferase, found in Shewanella sediminis (strain HAW-EB3).